Here is a 469-residue protein sequence, read N- to C-terminus: Probable Xaa-Pro aminopeptidase AN0832 (469 aa).

Residues aspartate 260, aspartate 271, glutamate 398, and glutamate 437 each coordinate Mn(2+).

It belongs to the peptidase M24B family. The cofactor is Mn(2+).

The catalysed reaction is Release of any N-terminal amino acid, including proline, that is linked to proline, even from a dipeptide or tripeptide.. Functionally, catalyzes the removal of a penultimate prolyl residue from the N-termini of peptides. In Emericella nidulans (strain FGSC A4 / ATCC 38163 / CBS 112.46 / NRRL 194 / M139) (Aspergillus nidulans), this protein is Probable Xaa-Pro aminopeptidase AN0832.